Consider the following 277-residue polypeptide: 3-methyl-2-oxobutanoate hydroxymethyltransferase (277 aa).

Residues D58 and D97 each coordinate Mg(2+). Residues 58–59 (DS), D97, and K127 contribute to the 3-methyl-2-oxobutanoate site. E129 serves as a coordination point for Mg(2+). E195 acts as the Proton acceptor in catalysis.

The protein belongs to the PanB family. In terms of assembly, homodecamer; pentamer of dimers. Mg(2+) is required as a cofactor.

The protein localises to the cytoplasm. The enzyme catalyses 3-methyl-2-oxobutanoate + (6R)-5,10-methylene-5,6,7,8-tetrahydrofolate + H2O = 2-dehydropantoate + (6S)-5,6,7,8-tetrahydrofolate. It participates in cofactor biosynthesis; (R)-pantothenate biosynthesis; (R)-pantoate from 3-methyl-2-oxobutanoate: step 1/2. In terms of biological role, catalyzes the reversible reaction in which hydroxymethyl group from 5,10-methylenetetrahydrofolate is transferred onto alpha-ketoisovalerate to form ketopantoate. This chain is 3-methyl-2-oxobutanoate hydroxymethyltransferase, found in Leifsonia xyli subsp. xyli (strain CTCB07).